The sequence spans 511 residues: RNA polymerase principal sigma factor HrdB (511 aa).

The tract at residues 72–186 (SAAEPKRTRK…AATEEPEGTE (115 aa)) is disordered. The segment covering 78–93 (RTRKSVAAKSPAKRTA) has biased composition (basic residues). Over residues 94–121 (TKAVAAKPVTSRKATAPAAPAAPATEPA) the composition is skewed to low complexity. The segment covering 132–158 (AAAKKTTAKKATAKKTTAKKAAAKKTT) has biased composition (basic residues). The segment at 211–347 (TADPVKDYLK…ITRAMADQAR (137 aa)) is binds RNA polymerase-binding protein RbpA. A sigma-70 factor domain-2 region spans residues 278–348 (LLEANLRLVV…TRAMADQART (71 aa)). The Interaction with polymerase core subunit RpoC motif lies at 302-305 (DLIQ). The tract at residues 357-433 (EVINKLARVQ…DSEAVVPADA (77 aa)) is sigma-70 factor domain-3. The sigma-70 factor domain-4 stretch occupies residues 446 to 499 (VLDTLSEREAGVVSMRFGLTDGQPKTLDEIGKVYGVTRERIRQIESKTMSKLRH). The H-T-H motif DNA-binding region spans 472-491 (LDEIGKVYGVTRERIRQIES).

This sequence belongs to the sigma-70 factor family. As to quaternary structure, homotrimer (Potential). interacts transiently with the RNA polymerase core complex. Interacts with RNA polymerase-binding protein RbpA via its sigma-2 region (residues 211-347) in a free form.

In terms of biological role, sigma factors are initiation factors that promote the attachment of RNA polymerase to specific initiation sites and are then released. This sigma factor is the primary sigma factor during exponential growth. Its activity is stimulated by RbpA. This Streptomyces coelicolor (strain ATCC BAA-471 / A3(2) / M145) protein is RNA polymerase principal sigma factor HrdB (hrdB).